The chain runs to 311 residues: tRNA dimethylallyltransferase (311 aa).

Residue glycine 8 to serine 15 participates in ATP binding. Substrate is bound at residue threonine 10 to serine 15.

This sequence belongs to the IPP transferase family. Monomer. Mg(2+) is required as a cofactor.

It carries out the reaction adenosine(37) in tRNA + dimethylallyl diphosphate = N(6)-dimethylallyladenosine(37) in tRNA + diphosphate. Functionally, catalyzes the transfer of a dimethylallyl group onto the adenine at position 37 in tRNAs that read codons beginning with uridine, leading to the formation of N6-(dimethylallyl)adenosine (i(6)A). This chain is tRNA dimethylallyltransferase, found in Mycobacterium leprae (strain Br4923).